Consider the following 155-residue polypeptide: Leader peptidase HopD (155 aa).

Belongs to the peptidase A24 family.

The protein is Leader peptidase HopD (hopD) of Escherichia coli.